Reading from the N-terminus, the 1131-residue chain is DNA polymerase II large subunit (1131 aa).

It belongs to the archaeal DNA polymerase II family. Heterodimer of a large subunit and a small subunit.

It carries out the reaction DNA(n) + a 2'-deoxyribonucleoside 5'-triphosphate = DNA(n+1) + diphosphate. The catalysed reaction is Exonucleolytic cleavage in the 3'- to 5'-direction to yield nucleoside 5'-phosphates.. Possesses two activities: a DNA synthesis (polymerase) and an exonucleolytic activity that degrades single-stranded DNA in the 3'- to 5'-direction. Has a template-primer preference which is characteristic of a replicative DNA polymerase. This chain is DNA polymerase II large subunit, found in Methanococcus vannielii (strain ATCC 35089 / DSM 1224 / JCM 13029 / OCM 148 / SB).